Consider the following 37-residue polypeptide: Bactericidin B-2 (37 aa).

Residue G37 is modified to Glycine amide.

It belongs to the cecropin family.

It is found in the secreted. Cecropins have lytic and antibacterial activity against several Gram-positive and Gram-negative bacteria. The polypeptide is Bactericidin B-2 (Manduca sexta (Tobacco hawkmoth)).